The chain runs to 356 residues: Heat-inducible transcription repressor HrcA (356 aa).

The protein belongs to the HrcA family.

Its function is as follows. Negative regulator of class I heat shock genes (grpE-dnaK-dnaJ and groELS operons). Prevents heat-shock induction of these operons. In Bartonella tribocorum (strain CIP 105476 / IBS 506), this protein is Heat-inducible transcription repressor HrcA.